A 217-amino-acid polypeptide reads, in one-letter code: Uracil-DNA glycosylase (217 aa).

Asp-62 acts as the Proton acceptor in catalysis.

The protein belongs to the uracil-DNA glycosylase (UDG) superfamily. UNG family.

The protein localises to the cytoplasm. The catalysed reaction is Hydrolyzes single-stranded DNA or mismatched double-stranded DNA and polynucleotides, releasing free uracil.. Excises uracil residues from the DNA which can arise as a result of misincorporation of dUMP residues by DNA polymerase or due to deamination of cytosine. The sequence is that of Uracil-DNA glycosylase from Streptococcus thermophilus (strain ATCC BAA-491 / LMD-9).